The following is a 72-amino-acid chain: Subtilisin-chymotrypsin inhibitor-2B (72 aa).

This sequence belongs to the protease inhibitor I13 (potato type I serine protease inhibitor) family.

Its function is as follows. Inhibits both subtilisin and chymotrypsin. The polypeptide is Subtilisin-chymotrypsin inhibitor-2B (Hordeum vulgare (Barley)).